We begin with the raw amino-acid sequence, 152 residues long: Protein SprT-like (152 aa).

The region spanning 9–149 (LQKLTETISL…CGKCNGKLKE (141 aa)) is the SprT-like domain. Position 70 (His-70) interacts with Zn(2+). Glu-71 is an active-site residue. A Zn(2+)-binding site is contributed by His-74.

This sequence belongs to the SprT family. Zn(2+) is required as a cofactor.

The protein resides in the cytoplasm. The polypeptide is Protein SprT-like (Staphylococcus saprophyticus subsp. saprophyticus (strain ATCC 15305 / DSM 20229 / NCIMB 8711 / NCTC 7292 / S-41)).